An 818-amino-acid polypeptide reads, in one-letter code: Probable helicase MAGATAMA 3 (818 aa).

The 301-residue stretch at 259-559 (NKSQKEAIDV…KMLKTQYRMH (301 aa)) folds into the UvrD-like helicase ATP-binding domain. 280–287 (GPPGTGKT) is a binding site for ATP. Acidic residues-rich tracts occupy residues 781–790 (PDAPLYEDES) and 798–818 (GDDD…AGED). A disordered region spans residues 781 to 818 (PDAPLYEDESLPVAPYGGDDDFGDGDADQDDVAMAGED).

Belongs to the helicase family. In terms of tissue distribution, expressed in flowers, siliques, leaves, roots and shoot apex.

It localises to the nucleus. Probable helicase that may regulate RNA molecules involved in nucleolar organization and pollen tube guidance. The polypeptide is Probable helicase MAGATAMA 3 (MAA3) (Arabidopsis thaliana (Mouse-ear cress)).